The sequence spans 127 residues: Small ribosomal subunit protein uS11 (127 aa).

Belongs to the universal ribosomal protein uS11 family. Part of the 30S ribosomal subunit. Interacts with proteins S7 and S18. Binds to IF-3.

Its function is as follows. Located on the platform of the 30S subunit, it bridges several disparate RNA helices of the 16S rRNA. Forms part of the Shine-Dalgarno cleft in the 70S ribosome. This chain is Small ribosomal subunit protein uS11, found in Nitrosococcus oceani (strain ATCC 19707 / BCRC 17464 / JCM 30415 / NCIMB 11848 / C-107).